We begin with the raw amino-acid sequence, 320 residues long: Phosphate acyltransferase (320 aa).

It belongs to the PlsX family. As to quaternary structure, homodimer. Probably interacts with PlsY.

The protein localises to the cytoplasm. The catalysed reaction is a fatty acyl-[ACP] + phosphate = an acyl phosphate + holo-[ACP]. It functions in the pathway lipid metabolism; phospholipid metabolism. In terms of biological role, catalyzes the reversible formation of acyl-phosphate (acyl-PO(4)) from acyl-[acyl-carrier-protein] (acyl-ACP). This enzyme utilizes acyl-ACP as fatty acyl donor, but not acyl-CoA. The polypeptide is Phosphate acyltransferase (Chlamydia pneumoniae (Chlamydophila pneumoniae)).